Reading from the N-terminus, the 356-residue chain is Altered inheritance of mitochondria protein 23, mitochondrial (356 aa).

The transit peptide at 1-32 directs the protein to the mitochondrion; sequence MLKVPLSDVLSQKMLFLKSFRYFHCTKYFSRD.

This sequence belongs to the AIM23 family.

Its subcellular location is the mitochondrion. This Saccharomyces cerevisiae (strain ATCC 204508 / S288c) (Baker's yeast) protein is Altered inheritance of mitochondria protein 23, mitochondrial (AIM23).